Consider the following 152-residue polypeptide: D-aminoacyl-tRNA deacylase (152 aa).

A Gly-cisPro motif, important for rejection of L-amino acids motif is present at residues 137–138 (GP).

It belongs to the DTD family. Homodimer.

The protein localises to the cytoplasm. The enzyme catalyses glycyl-tRNA(Ala) + H2O = tRNA(Ala) + glycine + H(+). It catalyses the reaction a D-aminoacyl-tRNA + H2O = a tRNA + a D-alpha-amino acid + H(+). In terms of biological role, an aminoacyl-tRNA editing enzyme that deacylates mischarged D-aminoacyl-tRNAs. Also deacylates mischarged glycyl-tRNA(Ala), protecting cells against glycine mischarging by AlaRS. Acts via tRNA-based rather than protein-based catalysis; rejects L-amino acids rather than detecting D-amino acids in the active site. By recycling D-aminoacyl-tRNA to D-amino acids and free tRNA molecules, this enzyme counteracts the toxicity associated with the formation of D-aminoacyl-tRNA entities in vivo and helps enforce protein L-homochirality. In Aromatoleum aromaticum (strain DSM 19018 / LMG 30748 / EbN1) (Azoarcus sp. (strain EbN1)), this protein is D-aminoacyl-tRNA deacylase.